The following is a 300-amino-acid chain: MSATLIDGKAFAARVRAQVAEHVTRLKADHGITPGLAVVLVGQDPASQVYVRSKGKQTTEVGMKSVEHKLDADTSETDLLAVVDQLNKDPDIHGILVQLPLPGHLDEDLVINSIAPEKDVDGFHISNVGLLGTGQKSMVPCTPLGCLMMLRDYHGSLLGMDAVVVGRSNIVGKPMAQLLLGDSCTVTIAHSRTKDLADVVRRADIVVAAVGRPEMVPGDWIKPGATVIDVGINRLDAPEKGEGKTRLVGDVDFDSCAAVAGAITPVPGGVGPMTIACLLANTVTACCRANGLEEPEGLTA.

NADP(+)-binding positions include 166–168 (GRS), S191, and I232.

This sequence belongs to the tetrahydrofolate dehydrogenase/cyclohydrolase family. Homodimer.

The enzyme catalyses (6R)-5,10-methylene-5,6,7,8-tetrahydrofolate + NADP(+) = (6R)-5,10-methenyltetrahydrofolate + NADPH. The catalysed reaction is (6R)-5,10-methenyltetrahydrofolate + H2O = (6R)-10-formyltetrahydrofolate + H(+). It functions in the pathway one-carbon metabolism; tetrahydrofolate interconversion. Catalyzes the oxidation of 5,10-methylenetetrahydrofolate to 5,10-methenyltetrahydrofolate and then the hydrolysis of 5,10-methenyltetrahydrofolate to 10-formyltetrahydrofolate. The sequence is that of Bifunctional protein FolD 1 from Roseobacter denitrificans (strain ATCC 33942 / OCh 114) (Erythrobacter sp. (strain OCh 114)).